Here is a 282-residue protein sequence, read N- to C-terminus: MASTAKILVTNDDGIHSPGLRLLYEAVKELGRVYVLAPETPKSASGLGITLHKPLRIGKVKIWGDTMVYITNGTPSDVIYIAIEEFSPRFDVVVSGVNIGDNTSIQVILSSGTIGAAAQAALLGIPGIAFSADIDEASQLEEDRETWENMKRVIRAITSWVLEHGMPEGVDLISVNFPRKVRKDTKVKIAPAARIKFLQKVSVLYDPRGRKYYWLYGTLVEPEPGSDVYVVHVEKAIAITPLSLNVNVKEGEWAAVVENIKPMIQAAESALRAQTSATVSTA.

The a divalent metal cation site is built by Asp-12, Asp-13, Ser-43, and Asn-98.

Belongs to the SurE nucleotidase family. It depends on a divalent metal cation as a cofactor.

The protein localises to the cytoplasm. The catalysed reaction is a ribonucleoside 5'-phosphate + H2O = a ribonucleoside + phosphate. In terms of biological role, nucleotidase that shows phosphatase activity on nucleoside 5'-monophosphates. The chain is 5'-nucleotidase SurE from Hyperthermus butylicus (strain DSM 5456 / JCM 9403 / PLM1-5).